The chain runs to 316 residues: Acetaldehyde dehydrogenase (316 aa).

NAD(+) is bound at residue Ser-12 to Ile-15. The Acyl-thioester intermediate role is filled by Cys-132. Residues Ser-163–Asn-171 and Asn-289 each bind NAD(+).

Belongs to the acetaldehyde dehydrogenase family.

It catalyses the reaction acetaldehyde + NAD(+) + CoA = acetyl-CoA + NADH + H(+). This chain is Acetaldehyde dehydrogenase (bphG), found in Bordetella avium (strain 197N).